Reading from the N-terminus, the 81-residue chain is Conotoxin Cl9.6 (81 aa).

An N-terminal signal peptide occupies residues 1–20; it reads MSTLGMTLLILLLLLPLATP. Residues 21-40 constitute a propeptide that is removed on maturation; the sequence is DDVGQPPKRDTLRNLLKIGT. 3 cysteine pairs are disulfide-bonded: C46–C69, C54–C76, and C60–C78.

In terms of tissue distribution, expressed by the venom duct.

The protein localises to the secreted. The chain is Conotoxin Cl9.6 from Californiconus californicus (California cone).